Reading from the N-terminus, the 172-residue chain is MEKMYNVGKIVNTHGLIGEIRVIATTDFPEERFQVGNTVYLFEKNSKKPEKLIIRSHRKHKNFDLLMFEGLTGIHQVERMKEGVLKIKEAQLTDLEENEFYFHEIIGCTVVTTDGEELGEITEILTPGANDVWVVKGADKKEKLIPYIADVVKDINTNDKKITIEVMEGLLD.

The PRC barrel domain maps to 97-170; the sequence is ENEFYFHEII…KITIEVMEGL (74 aa).

The protein belongs to the RimM family. In terms of assembly, binds ribosomal protein uS19.

The protein localises to the cytoplasm. Functionally, an accessory protein needed during the final step in the assembly of 30S ribosomal subunit, possibly for assembly of the head region. Essential for efficient processing of 16S rRNA. May be needed both before and after RbfA during the maturation of 16S rRNA. It has affinity for free ribosomal 30S subunits but not for 70S ribosomes. In Listeria innocua serovar 6a (strain ATCC BAA-680 / CLIP 11262), this protein is Ribosome maturation factor RimM.